The primary structure comprises 264 residues: Zinc import ATP-binding protein ZnuC (264 aa).

The ABC transporter domain maps to 11–226 (IELQNIKVVF…PTFIHLFGDQ (216 aa)). 43 to 50 (GPNGGGKS) contributes to the ATP binding site.

The protein belongs to the ABC transporter superfamily. Zinc importer (TC 3.A.1.15.5) family. In terms of assembly, the complex is composed of two ATP-binding proteins (ZnuC), two transmembrane proteins (ZnuB) and a solute-binding protein (ZnuA).

The protein localises to the cell inner membrane. The enzyme catalyses Zn(2+)(out) + ATP(in) + H2O(in) = Zn(2+)(in) + ADP(in) + phosphate(in) + H(+)(in). Its function is as follows. Part of the ABC transporter complex ZnuABC involved in zinc import. Responsible for energy coupling to the transport system. This chain is Zinc import ATP-binding protein ZnuC, found in Mannheimia succiniciproducens (strain KCTC 0769BP / MBEL55E).